A 421-amino-acid chain; its full sequence is Fasciclin-like arabinogalactan protein ARB_02922 (421 aa).

Positions 1 to 17 (MLLYYILVALWATVTYA) are cleaved as a signal peptide. FAS1 domains follow at residues 18–167 (KSFS…DRPL) and 169–296 (LPQS…SDVL). N-linked (GlcNAc...) asparagine glycosylation is found at asparagine 52, asparagine 75, asparagine 80, asparagine 120, asparagine 145, asparagine 181, asparagine 223, and asparagine 300. The tract at residues 300-401 (NDTAKPVPNA…NTPQPGAAAT (102 aa)) is disordered. Composition is skewed to gly residues over residues 344–356 (TSGG…GGGE) and 372–387 (SGGG…GGPG). Residues 388-401 (PTATNTPQPGAAAT) are compositionally biased toward low complexity. Glycine 397 carries the GPI-anchor amidated glycine lipid modification. Residues 398 to 421 (AAATERAKAGLAAVVGLGVVLINA) constitute a propeptide, removed in mature form.

Belongs to the fasciclin-like AGP family.

The protein resides in the cell membrane. In terms of biological role, may be a cell surface adhesion protein. This is Fasciclin-like arabinogalactan protein ARB_02922 from Arthroderma benhamiae (strain ATCC MYA-4681 / CBS 112371) (Trichophyton mentagrophytes).